A 619-amino-acid chain; its full sequence is Dihydroxy-acid dehydratase (619 aa).

Residue Asp80 coordinates Mg(2+). A [2Fe-2S] cluster-binding site is contributed by Cys121. Residues Asp122 and Lys123 each coordinate Mg(2+). Lys123 is subject to N6-carboxylysine. Position 196 (Cys196) interacts with [2Fe-2S] cluster. Mg(2+) is bound at residue Glu492. The Proton acceptor role is filled by Ser518.

This sequence belongs to the IlvD/Edd family. Homodimer. [2Fe-2S] cluster serves as cofactor. The cofactor is Mg(2+).

It carries out the reaction (2R)-2,3-dihydroxy-3-methylbutanoate = 3-methyl-2-oxobutanoate + H2O. The enzyme catalyses (2R,3R)-2,3-dihydroxy-3-methylpentanoate = (S)-3-methyl-2-oxopentanoate + H2O. The protein operates within amino-acid biosynthesis; L-isoleucine biosynthesis; L-isoleucine from 2-oxobutanoate: step 3/4. Its pathway is amino-acid biosynthesis; L-valine biosynthesis; L-valine from pyruvate: step 3/4. Functionally, functions in the biosynthesis of branched-chain amino acids. Catalyzes the dehydration of (2R,3R)-2,3-dihydroxy-3-methylpentanoate (2,3-dihydroxy-3-methylvalerate) into 2-oxo-3-methylpentanoate (2-oxo-3-methylvalerate) and of (2R)-2,3-dihydroxy-3-methylbutanoate (2,3-dihydroxyisovalerate) into 2-oxo-3-methylbutanoate (2-oxoisovalerate), the penultimate precursor to L-isoleucine and L-valine, respectively. This Bifidobacterium adolescentis (strain ATCC 15703 / DSM 20083 / NCTC 11814 / E194a) protein is Dihydroxy-acid dehydratase.